The primary structure comprises 440 residues: D-serine dehydratase (440 aa).

The residue at position 116 (Lys-116) is an N6-(pyridoxal phosphate)lysine.

This sequence belongs to the serine/threonine dehydratase family. DsdA subfamily. As to quaternary structure, monomer. Pyridoxal 5'-phosphate is required as a cofactor.

It carries out the reaction D-serine = pyruvate + NH4(+). This is D-serine dehydratase from Salmonella enteritidis PT4 (strain P125109).